A 282-amino-acid chain; its full sequence is GAKNGVHPPLGWIPIQDARIRQHGYNVISAAFPVILPDGTALWEDGMDANVKVATPAEMCQAKAAGATMVMSIGGAAAAIDLSSSSVADKFVSTIVPILKRYNFDGVDIDIEAGLSGSGTFGTLSASQANLVRIIDGILAQMPSNFGLTMAPETAYVTGGSVTYGSIWGAYLPIIKKYADNGRLWWLNMQYYNGAMYGCSGDSYEAGTVKGFVAQTDCLDKGLVIQGTTIRVPYDKQVPGLPAQSGAGGGYMSPSLVGQAWDHYNGSLKGLMTWSINWDGSK.

Residues 1-282 form the GH18 domain; it reads GAKNGVHPPL…TWSINWDGSK (282 aa). Glu112 functions as the Proton donor in the catalytic mechanism. An N-linked (GlcNAc...) asparagine glycan is attached at Asn265.

Belongs to the glycosyl hydrolase 18 family. Chitinase class V subfamily.

It localises to the secreted. The catalysed reaction is Random endo-hydrolysis of N-acetyl-beta-D-glucosaminide (1-&gt;4)-beta-linkages in chitin and chitodextrins.. Functionally, secreted chitinase involved in the degradation of chitin, a component of the cell walls of fungi and exoskeletal elements of some animals (including worms and arthropods). Participates in the infection process and directly acts in the penetration process of the host cuticle. The protein is Endochitinase 4 (chi4) of Metarhizium anisopliae (Entomophthora anisopliae).